A 483-amino-acid polypeptide reads, in one-letter code: Putative inorganic phosphate cotransporter (483 aa).

7 helical membrane-spanning segments follow: residues 64–84 (YILS…GILA), 90–110 (LRFL…VPVA), 187–207 (IFYV…IFVY), 292–312 (LPYL…DWMI), 349–369 (ALTL…YSGF), 383–403 (FLMS…PIAA), and 420–440 (IVFF…NIFG). A disordered region spans residues 447-483 (WDNPSEDEQKPALESSSTTNPPRLSNGSSAPRAISSS). Residues 460–483 (ESSSTTNPPRLSNGSSAPRAISSS) are compositionally biased toward polar residues.

Belongs to the major facilitator superfamily. Sodium/anion cotransporter family.

The protein localises to the membrane. In terms of biological role, may be an inorganic phosphate cotransporter. This is Putative inorganic phosphate cotransporter (Picot) from Drosophila ananassae (Fruit fly).